The sequence spans 373 residues: P2Y purinoceptor 1 (373 aa).

Over 1–51 (MTEVPWSAVPNGTDAAFLAGLGSLWGNSTIASTAAVSSSFRCALIKTGFQF) the chain is Extracellular. Residues Asn11 and Asn27 are each glycosylated (N-linked (GlcNAc...) asparagine). 2 disulfides stabilise this stretch: Cys42/Cys296 and Cys124/Cys202. Lys46 contacts ADP. The helical transmembrane segment at 52-74 (YYLPAVYILVFIIGFLGNSVAIW) threads the bilayer. Residues 75–87 (MFVFHMKPWSGIS) are Cytoplasmic-facing. The helical transmembrane segment at 88-109 (VYMFNLALADFLYVLTLPALIF) threads the bilayer. The Extracellular portion of the chain corresponds to 110–125 (YYFNKTDWIFGDVMCK). Asn113 carries N-linked (GlcNAc...) asparagine glycosylation. The chain crosses the membrane as a helical span at residues 126–147 (LQRFIFHVNLYGSILFLTCISA). Residues 148–166 (HRYSGVVYPLKSLGRLKKK) lie on the Cytoplasmic side of the membrane. A helical transmembrane segment spans residues 167–188 (NAIYVSVLVWLIVVVAISPILF). Topologically, residues 189-214 (YSGTGIRKNKTVTCYDSTSDEYLRSY) are extracellular. Asn197 carries an N-linked (GlcNAc...) asparagine glycan. 203–205 (YDS) serves as a coordination point for ADP. A helical membrane pass occupies residues 215 to 237 (FIYSMCTTVAMFCIPLVLILGCY). Over 238 to 260 (GLIVRALIYKDLDNSPLRRKSIY) the chain is Cytoplasmic. Residues 261–284 (LVIIVLTVFAVSYIPFHVMKTMNL) traverse the membrane as a helical segment. ADP contacts are provided by residues 283–287 (NLRAR), 303–306 (YATY), and Arg310. The Extracellular segment spans residues 285–303 (RARLDFQTPEMCDFNDRVY). The chain crosses the membrane as a helical span at residues 304 to 325 (ATYQVTRGLASLNSCVDPILYF). Over 326 to 373 (LAGDTFRRRLSRATRKASRRSEANLQSKSEEMTLNILSEFKQNGDTSL) the chain is Cytoplasmic.

The protein belongs to the G-protein coupled receptor 1 family. In terms of tissue distribution, expressed in muscle, heart, liver, kidney, lung, brain, spleen, but not in testis.

The protein resides in the cell membrane. In terms of biological role, receptor for extracellular adenine nucleotides such as ADP. In platelets, binding to ADP leads to mobilization of intracellular calcium ions via activation of phospholipase C, a change in platelet shape, and ultimately platelet aggregation. In Rattus norvegicus (Rat), this protein is P2Y purinoceptor 1 (P2ry1).